The sequence spans 83 residues: Cell division topological specificity factor (83 aa).

It belongs to the MinE family.

Functionally, prevents the cell division inhibition by proteins MinC and MinD at internal division sites while permitting inhibition at polar sites. This ensures cell division at the proper site by restricting the formation of a division septum at the midpoint of the long axis of the cell. The polypeptide is Cell division topological specificity factor (Bordetella parapertussis (strain 12822 / ATCC BAA-587 / NCTC 13253)).